Here is a 677-residue protein sequence, read N- to C-terminus: Methionine--tRNA ligase (677 aa).

Positions 15 to 25 (PYANGSIHLGH) match the 'HIGH' region motif. Residues Cys-146, Cys-149, Cys-159, and Cys-162 each coordinate Zn(2+). Residues 333–337 (KMSKS) carry the 'KMSKS' region motif. Lys-336 is a binding site for ATP. The tRNA-binding domain maps to 575-677 (DFAKIDLRVA…DGAKPGQQVK (103 aa)).

Belongs to the class-I aminoacyl-tRNA synthetase family. MetG type 1 subfamily. In terms of assembly, homodimer. Zn(2+) is required as a cofactor.

It is found in the cytoplasm. It carries out the reaction tRNA(Met) + L-methionine + ATP = L-methionyl-tRNA(Met) + AMP + diphosphate. Is required not only for elongation of protein synthesis but also for the initiation of all mRNA translation through initiator tRNA(fMet) aminoacylation. The protein is Methionine--tRNA ligase of Salmonella choleraesuis (strain SC-B67).